Consider the following 735-residue polypeptide: MLKLFSAFRKDKIWDFDGGIHPPEMKTQSNGTPLRQVPLAPRFVIPLKQHIGAEGELCVSVGDRVLRGQALTRGRGRMLPVHAPTSGTVIAIAPHSTAHPSALAELSVIIDADGEDRWIEREGWSDYRAHSREALIERIHQYGVAGLGGAGFPTGVKLQGGGDKITTLIINAAECEPYITADDRLMQDCAAQIVEGIRILAHILQPREVLIGIEDNKPQAISMLRAVLADAHDISLRVIPTKYPSGGAKQLTRILTGKQVPHGGRSSDIGVLMQNVGTAYAVKRAVIDGEPITERVVTLTGEAVSRPGNVWARLGTPVRHLLNDAGFCPSADQMVIMGGPLMGFTLPWLDVPVVKITNCLLAPSVTEMGAPQEEKSCIRCSACADACPADLLPQQLYWFSKGQQHDKATAHHIADCIECGACAWVCPSNIPLVQYFRQEKAEINAIRLEEKRAAEAKARFEARQARLEREKAARLARHKSAAVQPAAKDQDAIAAALARVKEKQAQATQPVVIQAGSQPDNSAVIAAREARKAQARAKQAAHPMADSAIPGDDPSKAAVEAAIARAKARKQEQQAGSEPAEPVDPRKAAVEAAIARAKARKQEQQAGSEPVEAVDPRKAAVEAAIARAKARKQEQQTGSEPAEAVDPRKAAVEAAIARAKARKQEQQTGSEPAEPIDPRKAAVEAAIARAKARKQEQQAGSEPAEPADPRKAAVAAAIARVQAKKAAQQQVVNED.

4Fe-4S ferredoxin-type domains follow at residues 368–397 (MGAP…QQLY) and 407–436 (KATA…VQYF). [4Fe-4S] cluster is bound by residues cysteine 377, cysteine 380, cysteine 383, cysteine 387, cysteine 416, cysteine 419, cysteine 422, and cysteine 426. The interval 538 to 715 (KQAAHPMADS…PADPRKAAVA (178 aa)) is disordered. The span at 556–565 (KAAVEAAIAR) shows a compositional bias: low complexity.

The protein belongs to the 4Fe4S bacterial-type ferredoxin family. RnfC subfamily. In terms of assembly, the complex is composed of six subunits: RsxA, RsxB, RsxC, RsxD, RsxE and RsxG. The cofactor is [4Fe-4S] cluster.

It localises to the cell inner membrane. Part of a membrane-bound complex that couples electron transfer with translocation of ions across the membrane. Required to maintain the reduced state of SoxR. The chain is Ion-translocating oxidoreductase complex subunit C from Salmonella typhimurium (strain LT2 / SGSC1412 / ATCC 700720).